The chain runs to 253 residues: Imidazole glycerol phosphate synthase subunit HisF (253 aa).

Catalysis depends on residues aspartate 11 and aspartate 130.

The protein belongs to the HisA/HisF family. Heterodimer of HisH and HisF.

It localises to the cytoplasm. The enzyme catalyses 5-[(5-phospho-1-deoxy-D-ribulos-1-ylimino)methylamino]-1-(5-phospho-beta-D-ribosyl)imidazole-4-carboxamide + L-glutamine = D-erythro-1-(imidazol-4-yl)glycerol 3-phosphate + 5-amino-1-(5-phospho-beta-D-ribosyl)imidazole-4-carboxamide + L-glutamate + H(+). It functions in the pathway amino-acid biosynthesis; L-histidine biosynthesis; L-histidine from 5-phospho-alpha-D-ribose 1-diphosphate: step 5/9. Functionally, IGPS catalyzes the conversion of PRFAR and glutamine to IGP, AICAR and glutamate. The HisF subunit catalyzes the cyclization activity that produces IGP and AICAR from PRFAR using the ammonia provided by the HisH subunit. The sequence is that of Imidazole glycerol phosphate synthase subunit HisF from Cereibacter sphaeroides (strain KD131 / KCTC 12085) (Rhodobacter sphaeroides).